Reading from the N-terminus, the 295-residue chain is Phosphatidylserine decarboxylase proenzyme (295 aa).

Active-site charge relay system; for autoendoproteolytic cleavage activity residues include aspartate 90 and serine 258. Serine 258 functions as the Schiff-base intermediate with substrate; via pyruvic acid; for decarboxylase activity in the catalytic mechanism. Serine 258 carries the pyruvic acid (Ser); by autocatalysis modification.

This sequence belongs to the phosphatidylserine decarboxylase family. PSD-B subfamily. Prokaryotic type I sub-subfamily. As to quaternary structure, heterodimer of a large membrane-associated beta subunit and a small pyruvoyl-containing alpha subunit. Pyruvate is required as a cofactor. Post-translationally, is synthesized initially as an inactive proenzyme. Formation of the active enzyme involves a self-maturation process in which the active site pyruvoyl group is generated from an internal serine residue via an autocatalytic post-translational modification. Two non-identical subunits are generated from the proenzyme in this reaction, and the pyruvate is formed at the N-terminus of the alpha chain, which is derived from the carboxyl end of the proenzyme. The autoendoproteolytic cleavage occurs by a canonical serine protease mechanism, in which the side chain hydroxyl group of the serine supplies its oxygen atom to form the C-terminus of the beta chain, while the remainder of the serine residue undergoes an oxidative deamination to produce ammonia and the pyruvoyl prosthetic group on the alpha chain. During this reaction, the Ser that is part of the protease active site of the proenzyme becomes the pyruvoyl prosthetic group, which constitutes an essential element of the active site of the mature decarboxylase.

It is found in the cell membrane. The enzyme catalyses a 1,2-diacyl-sn-glycero-3-phospho-L-serine + H(+) = a 1,2-diacyl-sn-glycero-3-phosphoethanolamine + CO2. The protein operates within phospholipid metabolism; phosphatidylethanolamine biosynthesis; phosphatidylethanolamine from CDP-diacylglycerol: step 2/2. Functionally, catalyzes the formation of phosphatidylethanolamine (PtdEtn) from phosphatidylserine (PtdSer). The polypeptide is Phosphatidylserine decarboxylase proenzyme (Blochmanniella pennsylvanica (strain BPEN)).